A 527-amino-acid chain; its full sequence is Rhamnogalacturonate lyase A (527 aa).

An N-terminal signal peptide occupies residues Met-1–Ala-20. N-linked (GlcNAc...) asparagine glycosylation is found at Asn-27 and Asn-46. 2 disulfide bridges follow: Cys-50-Cys-93 and Cys-184-Cys-193. N-linked (GlcNAc...) asparagine glycosylation is present at Asn-351.

This sequence belongs to the polysaccharide lyase 4 family.

Its subcellular location is the secreted. The enzyme catalyses Endotype eliminative cleavage of L-alpha-rhamnopyranosyl-(1-&gt;4)-alpha-D-galactopyranosyluronic acid bonds of rhamnogalacturonan I domains in ramified hairy regions of pectin leaving L-rhamnopyranose at the reducing end and 4-deoxy-4,5-unsaturated D-galactopyranosyluronic acid at the non-reducing end.. In terms of biological role, pectinolytic enzymes consist of four classes of enzymes: pectin lyase, polygalacturonase, pectin methylesterase and rhamnogalacturonase. Degrades the rhamnogalacturonan I (RG-I) backbone of pectin. Active against linseed rhamnogalacturonan. This is Rhamnogalacturonate lyase A (rglA) from Emericella nidulans (strain FGSC A4 / ATCC 38163 / CBS 112.46 / NRRL 194 / M139) (Aspergillus nidulans).